Here is a 793-residue protein sequence, read N- to C-terminus: DnaJ homolog subfamily C member 10 (793 aa).

Positions methionine 1–threonine 32 are cleaved as a signal peptide. Residues asparagine 35 to glycine 100 form the J domain. The Thioredoxin 1 domain occupies glutamate 130–histidine 232. A disulfide bond links cysteine 158 and cysteine 161. Trxb stretches follow at residues serine 235–phenylalanine 350 and proline 348–phenylalanine 463. Thioredoxin domains lie at histidine 454–leucine 553, serine 557–leucine 665, and alanine 671–tyrosine 776. Cysteine 480 and cysteine 483 are oxidised to a cystine. An N-linked (GlcNAc...) asparagine glycan is attached at asparagine 530. 2 disulfide bridges follow: cysteine 588–cysteine 591 and cysteine 700–cysteine 703. A Prevents secretion from ER motif is present at residues lysine 790–leucine 793.

As to quaternary structure, interacts with HSPA5 (via its J domain). Interacts with EDEM1. Ubiquitous. Particularly abundant in secretory tissues. Ubiquitous in fetal tissues and tumor tissues. Higher expression in fetal tissues than in adult tissues. Expressed in testis, pancreas, fetal thymus and fetal kidney. High expression in heart, liver, kidney, and testis. Low expression in spleen and skeletal muscle.

Its subcellular location is the endoplasmic reticulum lumen. Endoplasmic reticulum disulfide reductase involved both in the correct folding of proteins and degradation of misfolded proteins. Required for efficient folding of proteins in the endoplasmic reticulum by catalyzing the removal of non-native disulfide bonds formed during the folding of proteins, such as LDLR. Also involved in endoplasmic reticulum-associated degradation (ERAD) by reducing incorrect disulfide bonds in misfolded glycoproteins recognized by EDEM1. Interaction with HSPA5 is required its activity, not for the disulfide reductase activity, but to facilitate the release of DNAJC10 from its substrate. Promotes apoptotic signaling pathway in response to endoplasmic reticulum stress. The protein is DnaJ homolog subfamily C member 10 (Dnajc10) of Mus musculus (Mouse).